Reading from the N-terminus, the 180-residue chain is Symerythrin (180 aa).

The segment at residues 17–127 (FQDAVSHNNT…RRALETALEV (111 aa)) is a cross-link (3-(L-phenylalan-2'-yl)-L-valine (Phe-Val)). Positions 21–180 (VSHNNTDANA…RALENLLEVA (160 aa)) constitute a Ferritin-like diiron domain. The Fe(3+) site is built by glutamate 37, glutamate 40, glutamate 71, glutamate 128, glutamate 131, glutamate 162, and histidine 165.

In terms of assembly, monomer. It depends on Fe(3+) as a cofactor.

It localises to the plastid. The protein resides in the cyanelle. Its function is as follows. Exhibits oxidase-like and peroxidase-like activities in vitro. This Cyanophora paradoxa protein is Symerythrin.